We begin with the raw amino-acid sequence, 301 residues long: Large ribosomal subunit protein uL18y (301 aa).

Residues 247 to 267 (RAEPNHKKTEKSAPKEHKRYN) form a disordered region. A compositionally biased stretch (basic and acidic residues) spans 249–261 (EPNHKKTEKSAPK).

It belongs to the universal ribosomal protein uL18 family. As to quaternary structure, component of the large ribosomal subunit (LSU).

It is found in the cytoplasm. Its subcellular location is the nucleus. The protein resides in the nucleolus. It localises to the nucleoplasm. Component of the ribosome, a large ribonucleoprotein complex responsible for the synthesis of proteins in the cell. The small ribosomal subunit (SSU) binds messenger RNAs (mRNAs) and translates the encoded message by selecting cognate aminoacyl-transfer RNA (tRNA) molecules. The large subunit (LSU) contains the ribosomal catalytic site termed the peptidyl transferase center (PTC), which catalyzes the formation of peptide bonds, thereby polymerizing the amino acids delivered by tRNAs into a polypeptide chain. The nascent polypeptides leave the ribosome through a tunnel in the LSU and interact with protein factors that function in enzymatic processing, targeting, and the membrane insertion of nascent chains at the exit of the ribosomal tunnel. Seems involved in the regulation of cell proliferation. Essential in leaf polarity establishment, probably having a role for translation in leaf dorsoventral patterning to specify leaf adaxial identity. The protein is Large ribosomal subunit protein uL18y of Arabidopsis thaliana (Mouse-ear cress).